Reading from the N-terminus, the 64-residue chain is ICEBs1 excisionase (64 aa).

Functionally, required for the excision of the integrative and conjugative element ICEBs1. Excision of ICEBs1 requires two sites, attL and attR, at the left and right ends of the integrated ICEBs1. This is ICEBs1 excisionase (xis) from Bacillus subtilis (strain 168).